A 263-amino-acid chain; its full sequence is 3-methyl-2-oxobutanoate hydroxymethyltransferase (263 aa).

Mg(2+) contacts are provided by Asp45 and Asp84. 3-methyl-2-oxobutanoate contacts are provided by residues 45-46 (DS), Asp84, and Lys112. Glu114 contributes to the Mg(2+) binding site. Residue Glu181 is the Proton acceptor of the active site.

This sequence belongs to the PanB family. In terms of assembly, homodecamer; pentamer of dimers. It depends on Mg(2+) as a cofactor.

It is found in the cytoplasm. It catalyses the reaction 3-methyl-2-oxobutanoate + (6R)-5,10-methylene-5,6,7,8-tetrahydrofolate + H2O = 2-dehydropantoate + (6S)-5,6,7,8-tetrahydrofolate. It participates in cofactor biosynthesis; (R)-pantothenate biosynthesis; (R)-pantoate from 3-methyl-2-oxobutanoate: step 1/2. Functionally, catalyzes the reversible reaction in which hydroxymethyl group from 5,10-methylenetetrahydrofolate is transferred onto alpha-ketoisovalerate to form ketopantoate. This Photorhabdus laumondii subsp. laumondii (strain DSM 15139 / CIP 105565 / TT01) (Photorhabdus luminescens subsp. laumondii) protein is 3-methyl-2-oxobutanoate hydroxymethyltransferase.